The sequence spans 268 residues: Peptide transport system ATP-binding protein SapF (268 aa).

The region spanning 6 to 251 (LEVRNLSKTF…PLHELTRRLI (246 aa)) is the ABC transporter domain. 47–54 (GENGSGKS) is an ATP binding site.

This sequence belongs to the ABC transporter superfamily.

It localises to the cell inner membrane. Involved in a peptide intake transport system that plays a role in the resistance to antimicrobial peptides. The chain is Peptide transport system ATP-binding protein SapF from Salmonella typhimurium (strain LT2 / SGSC1412 / ATCC 700720).